Consider the following 575-residue polypeptide: TOX high mobility group box family member 3 (575 aa).

Disordered stretches follow at residues 189-258 (LGGA…QKPV) and 516-575 (QQLQ…VSIF). Low complexity predominate over residues 195–214 (SHTSPSPPASKSATPSPSSS). Residues 222–238 (DANRAIGEKRTAPDSGK) show a composition bias toward basic and acidic residues. The span at 239–249 (KPKTPKKKKKK) shows a compositional bias: basic residues. Positions 254 to 322 (PQKPVSAYAL…EYLKALAAYR (69 aa)) form a DNA-binding region, HMG box. The span at 516–526 (QQLQHMQHQSQ) shows a compositional bias: low complexity. Positions 527–541 (PSPRQHSPVTSQITS) are enriched in polar residues. The segment covering 548–575 (SPQPASQQHQPQIQSQTQTQVLPQVSIF) has biased composition (low complexity).

Homodimer. Interacts (via HGM box) with CITED1 (via C-terminus); the interaction increases estrogen-response element (ERE)-dependent transcription and protection against cell death. Interacts with CREB1 (phosphorylated form). Interacts with CREB1; the interaction is not depolarization dependent. Interacts with CREBBP (via C-terminus).

It localises to the nucleus. Transcriptional coactivator of the p300/CBP-mediated transcription complex. Activates transactivation through cAMP response element (CRE) sites. Protects against cell death by inducing antiapoptotic and repressing pro-apoptotic transcripts. Stimulates transcription from the estrogen-responsive or BCL-2 promoters. Required for depolarization-induced transcription activation of the C-FOS promoter in neurons. Associates with chromatin to the estrogen-responsive C3 promoter region. This Mus musculus (Mouse) protein is TOX high mobility group box family member 3 (Tox3).